Reading from the N-terminus, the 91-residue chain is Small ribosomal subunit protein uS19 (91 aa).

This sequence belongs to the universal ribosomal protein uS19 family.

Protein S19 forms a complex with S13 that binds strongly to the 16S ribosomal RNA. This chain is Small ribosomal subunit protein uS19, found in Fusobacterium nucleatum subsp. nucleatum (strain ATCC 25586 / DSM 15643 / BCRC 10681 / CIP 101130 / JCM 8532 / KCTC 2640 / LMG 13131 / VPI 4355).